Here is a 120-residue protein sequence, read N- to C-terminus: NAD(P)H-quinone oxidoreductase subunit 3, chloroplastic (120 aa).

The next 3 membrane-spanning stretches (helical) occupy residues isoleucine 3–isoleucine 23, methionine 64–valine 84, and leucine 89–valine 109.

This sequence belongs to the complex I subunit 3 family. In terms of assembly, NDH is composed of at least 16 different subunits, 5 of which are encoded in the nucleus.

It is found in the plastid. The protein resides in the chloroplast thylakoid membrane. The enzyme catalyses a plastoquinone + NADH + (n+1) H(+)(in) = a plastoquinol + NAD(+) + n H(+)(out). It catalyses the reaction a plastoquinone + NADPH + (n+1) H(+)(in) = a plastoquinol + NADP(+) + n H(+)(out). In terms of biological role, NDH shuttles electrons from NAD(P)H:plastoquinone, via FMN and iron-sulfur (Fe-S) centers, to quinones in the photosynthetic chain and possibly in a chloroplast respiratory chain. The immediate electron acceptor for the enzyme in this species is believed to be plastoquinone. Couples the redox reaction to proton translocation, and thus conserves the redox energy in a proton gradient. The sequence is that of NAD(P)H-quinone oxidoreductase subunit 3, chloroplastic from Nephroselmis olivacea (Green alga).